Here is a 350-residue protein sequence, read N- to C-terminus: Uroporphyrinogen decarboxylase (350 aa).

Substrate contacts are provided by residues Arg23 to Arg27, Asp73, Tyr150, Thr205, and His322.

This sequence belongs to the uroporphyrinogen decarboxylase family. As to quaternary structure, homodimer.

The protein resides in the cytoplasm. It catalyses the reaction uroporphyrinogen III + 4 H(+) = coproporphyrinogen III + 4 CO2. The protein operates within porphyrin-containing compound metabolism; protoporphyrin-IX biosynthesis; coproporphyrinogen-III from 5-aminolevulinate: step 4/4. Its function is as follows. Catalyzes the decarboxylation of four acetate groups of uroporphyrinogen-III to yield coproporphyrinogen-III. This is Uroporphyrinogen decarboxylase from Methylococcus capsulatus (strain ATCC 33009 / NCIMB 11132 / Bath).